A 141-amino-acid polypeptide reads, in one-letter code: HTH-type transcriptional repressor NsrR (141 aa).

One can recognise an HTH rrf2-type domain in the interval 2–129; it reads QLTSFTDYGL…DNYTLADLVE (128 aa). Residues 28–51 constitute a DNA-binding region (H-T-H motif); that stretch reads ISEVTDVYGVSRNHMVKIINQLSR. Residues Cys91, Cys96, and Cys102 each contribute to the [2Fe-2S] cluster site.

Requires [2Fe-2S] cluster as cofactor.

In terms of biological role, nitric oxide-sensitive repressor of genes involved in protecting the cell against nitrosative stress. May require iron for activity. The sequence is that of HTH-type transcriptional repressor NsrR from Escherichia fergusonii (strain ATCC 35469 / DSM 13698 / CCUG 18766 / IAM 14443 / JCM 21226 / LMG 7866 / NBRC 102419 / NCTC 12128 / CDC 0568-73).